The following is a 284-amino-acid chain: 2-dehydro-3-deoxyphosphooctonate aldolase (284 aa).

Belongs to the KdsA family.

It is found in the cytoplasm. It catalyses the reaction D-arabinose 5-phosphate + phosphoenolpyruvate + H2O = 3-deoxy-alpha-D-manno-2-octulosonate-8-phosphate + phosphate. It participates in carbohydrate biosynthesis; 3-deoxy-D-manno-octulosonate biosynthesis; 3-deoxy-D-manno-octulosonate from D-ribulose 5-phosphate: step 2/3. It functions in the pathway bacterial outer membrane biogenesis; lipopolysaccharide biosynthesis. The protein is 2-dehydro-3-deoxyphosphooctonate aldolase of Escherichia coli O6:K15:H31 (strain 536 / UPEC).